The primary structure comprises 288 residues: SUR7 family protein pun1 (288 aa).

Residues 1–11 (MGMGFNPIKAL) are Cytoplasmic-facing. Residues 12-32 (FTGIGTVCVGVGALLSILCII) form a helical membrane-spanning segment. N-linked (GlcNAc...) asparagine glycosylation is found at N33, N50, N59, N66, N122, N153, and N160. Residues 33–185 (NQTQHNIAFQ…GACYAMRAMY (153 aa)) are Extracellular-facing. The chain crosses the membrane as a helical span at residues 186-206 (ILGFIFFALTIVSIVISCLPF). At 207-210 (FGPL) the chain is on the cytoplasmic side. A helical transmembrane segment spans residues 211-231 (FLNVFSFFATIFTFIAAVIAV). Residues 232-257 (ATYRIAISELEKNIEILNIPIVLGKK) lie on the Extracellular side of the membrane. Residues 258–278 (IYAYSFLSAAAGLAACILYFI) traverse the membrane as a helical segment. Residues 279 to 288 (GNLTSGYSPL) lie on the Cytoplasmic side of the membrane.

This sequence belongs to the SUR7 family.

Its subcellular location is the golgi apparatus membrane. It localises to the cell membrane. It is found in the cell tip. In terms of biological role, contributes to the wild-type cellular response to nitrogen stress through signaling pathways that regulate the expression of genes involved in amino acid biosynthesis. Required for wild-type filamentous growth, cell growth, and cell-cell adhesion. The sequence is that of SUR7 family protein pun1 (pun1) from Schizosaccharomyces pombe (strain 972 / ATCC 24843) (Fission yeast).